The chain runs to 196 residues: Elongation factor Ts (196 aa).

An involved in Mg(2+) ion dislocation from EF-Tu region spans residues 80 to 83; it reads TDFV.

This sequence belongs to the EF-Ts family.

It localises to the cytoplasm. Functionally, associates with the EF-Tu.GDP complex and induces the exchange of GDP to GTP. It remains bound to the aminoacyl-tRNA.EF-Tu.GTP complex up to the GTP hydrolysis stage on the ribosome. The sequence is that of Elongation factor Ts from Thermosipho melanesiensis (strain DSM 12029 / CIP 104789 / BI429).